We begin with the raw amino-acid sequence, 239 residues long: tRNA (guanine-N(1)-)-methyltransferase (239 aa).

Residues G110 and 130–135 (VGDYVL) each bind S-adenosyl-L-methionine.

It belongs to the RNA methyltransferase TrmD family. As to quaternary structure, homodimer.

It localises to the cytoplasm. It carries out the reaction guanosine(37) in tRNA + S-adenosyl-L-methionine = N(1)-methylguanosine(37) in tRNA + S-adenosyl-L-homocysteine + H(+). Its function is as follows. Specifically methylates guanosine-37 in various tRNAs. This chain is tRNA (guanine-N(1)-)-methyltransferase, found in Borrelia hermsii (strain HS1 / DAH).